The chain runs to 195 residues: dTTP/UTP pyrophosphatase (195 aa).

Asp77 serves as the catalytic Proton acceptor.

Belongs to the Maf family. YhdE subfamily. Requires a divalent metal cation as cofactor.

The protein localises to the cytoplasm. It carries out the reaction dTTP + H2O = dTMP + diphosphate + H(+). The enzyme catalyses UTP + H2O = UMP + diphosphate + H(+). Its function is as follows. Nucleoside triphosphate pyrophosphatase that hydrolyzes dTTP and UTP. May have a dual role in cell division arrest and in preventing the incorporation of modified nucleotides into cellular nucleic acids. This is dTTP/UTP pyrophosphatase from Flavobacterium psychrophilum (strain ATCC 49511 / DSM 21280 / CIP 103535 / JIP02/86).